Here is an 88-residue protein sequence, read N- to C-terminus: Large ribosomal subunit protein bL27 (88 aa).

Positions 1 to 21 are disordered; sequence MAHKKGASSSRNGRDSAAQRL.

This sequence belongs to the bacterial ribosomal protein bL27 family.

In Mycobacterium marinum (strain ATCC BAA-535 / M), this protein is Large ribosomal subunit protein bL27.